The chain runs to 267 residues: 3-methyl-2-oxobutanoate hydroxymethyltransferase (267 aa).

Asp-45 and Asp-84 together coordinate Mg(2+). 3-methyl-2-oxobutanoate is bound by residues 45-46 (DS), Asp-84, and Lys-113. Position 115 (Glu-115) interacts with Mg(2+). Glu-182 (proton acceptor) is an active-site residue.

It belongs to the PanB family. Homodecamer; pentamer of dimers. Mg(2+) is required as a cofactor.

The protein resides in the cytoplasm. The catalysed reaction is 3-methyl-2-oxobutanoate + (6R)-5,10-methylene-5,6,7,8-tetrahydrofolate + H2O = 2-dehydropantoate + (6S)-5,6,7,8-tetrahydrofolate. Its pathway is cofactor biosynthesis; coenzyme A biosynthesis. Functionally, catalyzes the reversible reaction in which hydroxymethyl group from 5,10-methylenetetrahydrofolate is transferred onto alpha-ketoisovalerate to form ketopantoate. This chain is 3-methyl-2-oxobutanoate hydroxymethyltransferase, found in Saccharolobus islandicus (strain Y.G.57.14 / Yellowstone #1) (Sulfolobus islandicus).